The chain runs to 276 residues: CTD small phosphatase-like protein (276 aa).

Residues 1-31 (MDGPAIITQVTNPKEDEARSPVAGEKASQRN) form a disordered region. The region spanning 102–260 (LDYGKKCVVI…LDLIPFFEGL (159 aa)) is the FCP1 homology domain. D112 serves as the catalytic 4-aspartylphosphate intermediate. Positions 112, 114, and 223 each coordinate Mg(2+). D114 functions as the Proton donor in the catalytic mechanism.

In terms of assembly, monomer. Interacts with REST. Mg(2+) serves as cofactor.

The protein resides in the nucleus. The catalysed reaction is O-phospho-L-seryl-[protein] + H2O = L-seryl-[protein] + phosphate. It catalyses the reaction O-phospho-L-threonyl-[protein] + H2O = L-threonyl-[protein] + phosphate. Preferentially catalyzes the dephosphorylation of 'Ser-5' within the tandem 7 residue repeats in the C-terminal domain (CTD) of the largest RNA polymerase II subunit POLR2A. Negatively regulates RNA polymerase II transcription, possibly by controlling the transition from initiation/capping to processive transcript elongation. Recruited by REST to neuronal genes that contain RE-1 elements, leading to neuronal gene silencing in non-neuronal cells. This is CTD small phosphatase-like protein (Ctdspl) from Mus musculus (Mouse).